Here is a 454-residue protein sequence, read N- to C-terminus: Bifunctional protein GlmU (454 aa).

The pyrophosphorylase stretch occupies residues 1–225 (MNIVILAAGM…LWETLGVNSK (225 aa)). Residues 6-9 (LAAG), lysine 20, glutamine 71, 76-77 (GT), 98-100 (YGD), glycine 135, glutamate 150, asparagine 165, and asparagine 223 each bind UDP-N-acetyl-alpha-D-glucosamine. Aspartate 100 serves as a coordination point for Mg(2+). Asparagine 223 lines the Mg(2+) pocket. The linker stretch occupies residues 226–246 (VQLAEIERIHQRNIAQRLLEA). The interval 247–454 (GVTLLDPARI…WQRPVKQPKK (208 aa)) is N-acetyltransferase. Positions 329 and 347 each coordinate UDP-N-acetyl-alpha-D-glucosamine. Histidine 359 (proton acceptor) is an active-site residue. Tyrosine 362 and asparagine 373 together coordinate UDP-N-acetyl-alpha-D-glucosamine. Acetyl-CoA contacts are provided by residues alanine 376, 382 to 383 (NY), serine 401, alanine 419, and arginine 436.

In the N-terminal section; belongs to the N-acetylglucosamine-1-phosphate uridyltransferase family. It in the C-terminal section; belongs to the transferase hexapeptide repeat family. In terms of assembly, homotrimer. Mg(2+) is required as a cofactor.

It is found in the cytoplasm. The catalysed reaction is alpha-D-glucosamine 1-phosphate + acetyl-CoA = N-acetyl-alpha-D-glucosamine 1-phosphate + CoA + H(+). The enzyme catalyses N-acetyl-alpha-D-glucosamine 1-phosphate + UTP + H(+) = UDP-N-acetyl-alpha-D-glucosamine + diphosphate. Its pathway is nucleotide-sugar biosynthesis; UDP-N-acetyl-alpha-D-glucosamine biosynthesis; N-acetyl-alpha-D-glucosamine 1-phosphate from alpha-D-glucosamine 6-phosphate (route II): step 2/2. It participates in nucleotide-sugar biosynthesis; UDP-N-acetyl-alpha-D-glucosamine biosynthesis; UDP-N-acetyl-alpha-D-glucosamine from N-acetyl-alpha-D-glucosamine 1-phosphate: step 1/1. It functions in the pathway bacterial outer membrane biogenesis; LPS lipid A biosynthesis. In terms of biological role, catalyzes the last two sequential reactions in the de novo biosynthetic pathway for UDP-N-acetylglucosamine (UDP-GlcNAc). The C-terminal domain catalyzes the transfer of acetyl group from acetyl coenzyme A to glucosamine-1-phosphate (GlcN-1-P) to produce N-acetylglucosamine-1-phosphate (GlcNAc-1-P), which is converted into UDP-GlcNAc by the transfer of uridine 5-monophosphate (from uridine 5-triphosphate), a reaction catalyzed by the N-terminal domain. This is Bifunctional protein GlmU from Cupriavidus metallidurans (strain ATCC 43123 / DSM 2839 / NBRC 102507 / CH34) (Ralstonia metallidurans).